The sequence spans 245 residues: Cysteine-rich secretory protein 3 (245 aa).

Residues Met1–Ala20 form the signal peptide. Residues Val43 to Tyr171 form the SCP domain. Intrachain disulfides connect Cys191-Cys198, Cys194-Cys203, Cys207-Cys240, Cys216-Cys234, and Cys225-Cys238. Residues Cys207–Cys240 enclose the ShKT domain. N-linked (GlcNAc...) asparagine glycosylation occurs at Asn239.

Belongs to the CRISP family. In terms of assembly, interacts with A1BG. As to expression, salivary gland, pancreas and prostate &gt; epididymis, ovary, thymus and colon.

Its subcellular location is the secreted. This chain is Cysteine-rich secretory protein 3 (CRISP3), found in Homo sapiens (Human).